The following is a 432-amino-acid chain: MKFTLVATVLLTFSLSAFAVEYPVLTTASPDQVGFDSQKLHRLDGWIQNQIDAGYPSINLLVIKDNHIVLQKAWGYAKKYDGSTLLAHPIRATTNTMYDLASNTKMYATNFALQKLVYEGKIDVNDLVSKYIPGFKDMPGDKIKGKNKLRIIDILHHVAGFPADPQYPNKNVAGKLFSQSKSTTLEMIKKTPLEYQPGSKHIYSDVDYMILGFIIESITAMPLDRYVETTIYKPLGLKHTVFNPLMKGFTPPQIAATELHGNTRDGVIHFPNIRTNTLWGQVHDEKAWYSMGGVSGHAGLFSDTHDMAVLMQVMLNGGGYGNVKLFDDKTVAQFTRRSPEDATFGLGWRVNGNASMTPTFGVLASPQTYGHTGWTGTLTSIDPVNHMAIVILGNRPHSPVANPKVNPNVFVSGLLPAATYGWIVDQIYGSLK.

Residues 7–25 (ATVLLTFSLSAFAVEYPVL) form a helical; Signal-anchor membrane-spanning segment.

Belongs to the peptidase S12 family. YfeW subfamily.

It is found in the cell inner membrane. It carries out the reaction Preferential cleavage: (Ac)2-L-Lys-D-Ala-|-D-Ala. Also transpeptidation of peptidyl-alanyl moieties that are N-acyl substituents of D-alanine.. This chain is Putative D-alanyl-D-alanine carboxypeptidase, found in Salmonella typhimurium (strain LT2 / SGSC1412 / ATCC 700720).